Reading from the N-terminus, the 1150-residue chain is Solute carrier family 12 member 6 (1150 aa).

The Cytoplasmic segment spans residues 1-135 (MHPPETTTKM…DEYFDKNLAL (135 aa)). The disordered stretch occupies residues 20–66 (TKIDDIPGLSDTSPDLSSRSSSRVRFSSRESVPETSRSEPMSEMSGA). The segment covering 28-45 (LSDTSPDLSSRSSSRVRF) has biased composition (low complexity). Residues serine 32 and serine 120 each carry the phosphoserine modification. The discontinuously helical transmembrane segment at 136-158 (FEEEMDTRPKVSSLLNRMANYTN) threads the bilayer. Positions 147 and 148 each coordinate K(+). Serine 148 carries the post-translational modification Phosphoserine. Asparagine 151 provides a ligand contact to chloride. Topologically, residues 159 to 165 (LTQGAKE) are extracellular. The interval 161 to 181 (QGAKEHEEAENITEGKKKPTK) is disordered. Positions 163–177 (AKEHEEAENITEGKK) are enriched in basic and acidic residues. Residues 166 to 188 (HEEAENITEGKKKPTKTPQMGTF) traverse the membrane as a helical segment. The Cytoplasmic portion of the chain corresponds to 189 to 211 (MGVYLPCLQNIFGVILFLRLTWV). The helical transmembrane segment at 212 to 245 (VGTAGVLQAFAIVLICCCCTMLTAISMSAIATNG) threads the bilayer. Residues 246–263 (VVPAGGSYFMISRALGPE) are Extracellular-facing. A run of 2 helical transmembrane segments spans residues 264 to 287 (FGGA…ILGA) and 288 to 316 (IEIF…AMLN). At 317–433 (NMRVYGTAFL…FVHNNVTSIQ (117 aa)) the chain is on the extracellular side. Cysteine 375 and cysteine 390 are disulfide-bonded. N-linked (GlcNAc...) asparagine glycans are attached at residues asparagine 379, asparagine 398, asparagine 411, and asparagine 428. Residues cysteine 410 and cysteine 420 are joined by a disulfide bond. Residues 434-454 (GIPGLASGIITENLWSNYLPK) form a helical membrane-spanning segment. Residues isoleucine 443, threonine 444, and asparagine 446 each contribute to the K(+) site. The chloride site is built by isoleucine 443 and threonine 444. Chloride-binding residues include leucine 447 and tryptophan 448. At 455–464 (GEIIEKPSAK) the chain is on the cytoplasmic side. A helical transmembrane segment spans residues 465 to 487 (SSDVLGSLNHEYVLVDITTSFTL). The Extracellular segment spans residues 488-518 (LVGIFFPSVTGIMAGSNRSGDLKDAQKSIPI). Residues 519–545 (GTILAILTTSFVYLSNVVLFGACIEGV) traverse the membrane as a helical segment. Residues 546–568 (VLRDKFGDAVKGNLVVGTLSWPS) are Cytoplasmic-facing. 2 helical membrane passes run 569–589 (PWVI…QSLT) and 590–612 (GAPR…VFGH). Isoleucine 603 lines the chloride pocket. Topologically, residues 613–629 (SKANGEPTWALLLTAAI) are cytoplasmic. The next 2 helical transmembrane spans lie at 630–649 (AELG…LSMF) and 650–665 (FLMC…ALQT). Residues 666-1150 (LLRTPNWRPR…GGSEVITIYS (485 aa)) are Cytoplasmic-facing. The interval 682–691 (ALSFMGMSIC) is scissor helix. Phosphoserine is present on serine 736. Residue threonine 778 is modified to Phosphothreonine. Position 981 is a phosphoserine (serine 981). Threonine 991 bears the Phosphothreonine; by OXSR1 and STK39 mark. 3 positions are modified to phosphoserine: serine 1023, serine 1029, and serine 1032. Threonine 1048 bears the Phosphothreonine; by OXSR1 and STK39 mark. The residue at position 1121 (tyrosine 1121) is a Phosphotyrosine. Residues 1133 to 1150 (ERVLLVRGGGSEVITIYS) are interaction with CKB.

Belongs to the SLC12A transporter family. K/Cl co-transporter subfamily. As to quaternary structure, homodimer; adopts a domain-swap conformation at the scissor helices connecting the transmembrane domain and C-terminal domain. Heterodimer with K-Cl cotransporter SLC12A5. Interacts (via C-terminus) with CKB; the interaction may be required for potassium-chloride cotransport activity. Post-translationally, phosphorylated, phosphorylation regulates transporter activity. Phosphorylated at Thr-991 and Thr-1048 by OXSR1/OSR1 and STK39/SPAK downstream of WNK kinases (WNK1, WNK2, WNK3 or WNK4), inhibiting the potassium-chloride cotransport activity. N-glycosylated. In terms of tissue distribution, expressed in brain (at protein level). Highly expressed in heart, brain and kidney. Detected at lower levels in skeletal muscle, placenta, lung and pancreas. Detected in umbilical vein endothelial cells. As to expression, more abundant in kidney. Testis specific.

Its subcellular location is the cell membrane. The protein resides in the basolateral cell membrane. It carries out the reaction K(+)(in) + chloride(in) = K(+)(out) + chloride(out). Its activity is regulated as follows. Inhibited following phosphorylation by OXSR1/OSR1 and STK39/SPAK: phosphorylation takes place downstream of WNK kinases (WNK1, WNK2, WNK3 or WNK4) in response to hyperosmotic stress and subsequent cell shrinkage. Activated by N-ethylmaleimide (NEM). Inhibited by DIOA, bumetanide and furosemide. In terms of biological role, mediates electroneutral potassium-chloride cotransport when activated by cell swelling. May contribute to cell volume homeostasis in single cells. Functionally, mediates electroneutral potassium-chloride cotransport when activated by cell swelling. May contribute to cell volume homeostasis in single cells. Its function is as follows. Mediates electroneutral potassium-chloride cotransport when activated by cell swelling. May contribute to cell volume homeostasis in single cells. This chain is Solute carrier family 12 member 6, found in Homo sapiens (Human).